The primary structure comprises 185 residues: Ribosome-recycling factor (185 aa).

Belongs to the RRF family.

Its subcellular location is the cytoplasm. Responsible for the release of ribosomes from messenger RNA at the termination of protein biosynthesis. May increase the efficiency of translation by recycling ribosomes from one round of translation to another. The chain is Ribosome-recycling factor from Glaesserella parasuis serovar 5 (strain SH0165) (Haemophilus parasuis).